A 446-amino-acid chain; its full sequence is tRNA-2-methylthio-N(6)-dimethylallyladenosine synthase (446 aa).

Residues 2-122 enclose the MTTase N-terminal domain; sequence KKAYVKSYGC…LPDLLRQSRE (121 aa). [4Fe-4S] cluster is bound by residues Cys-11, Cys-47, Cys-85, Cys-157, Cys-161, and Cys-164. The Radical SAM core domain occupies 143–375; that stretch reads RNRGVTGFLT…QDLLDRQRHA (233 aa). The 63-residue stretch at 378-440 folds into the TRAM domain; it reads AASVGTLTEI…SNSLFGEALE (63 aa).

Belongs to the methylthiotransferase family. MiaB subfamily. As to quaternary structure, monomer. [4Fe-4S] cluster serves as cofactor.

The protein resides in the cytoplasm. The enzyme catalyses N(6)-dimethylallyladenosine(37) in tRNA + (sulfur carrier)-SH + AH2 + 2 S-adenosyl-L-methionine = 2-methylsulfanyl-N(6)-dimethylallyladenosine(37) in tRNA + (sulfur carrier)-H + 5'-deoxyadenosine + L-methionine + A + S-adenosyl-L-homocysteine + 2 H(+). Functionally, catalyzes the methylthiolation of N6-(dimethylallyl)adenosine (i(6)A), leading to the formation of 2-methylthio-N6-(dimethylallyl)adenosine (ms(2)i(6)A) at position 37 in tRNAs that read codons beginning with uridine. The polypeptide is tRNA-2-methylthio-N(6)-dimethylallyladenosine synthase (Methylorubrum extorquens (strain CM4 / NCIMB 13688) (Methylobacterium extorquens)).